We begin with the raw amino-acid sequence, 240 residues long: Putative N-acetylmannosamine-6-phosphate 2-epimerase (240 aa).

Belongs to the NanE family.

It catalyses the reaction an N-acyl-D-glucosamine 6-phosphate = an N-acyl-D-mannosamine 6-phosphate. It functions in the pathway amino-sugar metabolism; N-acetylneuraminate degradation; D-fructose 6-phosphate from N-acetylneuraminate: step 3/5. In terms of biological role, converts N-acetylmannosamine-6-phosphate (ManNAc-6-P) to N-acetylglucosamine-6-phosphate (GlcNAc-6-P). This is Putative N-acetylmannosamine-6-phosphate 2-epimerase from Vibrio cholerae serotype O1 (strain ATCC 39315 / El Tor Inaba N16961).